A 466-amino-acid polypeptide reads, in one-letter code: Phytase A (466 aa).

The N-terminal stretch at 1–19 is a signal peptide; that stretch reads MGVFVVLLSIATLFGSTSG. Asn27 is a glycosylation site (N-linked (GlcNAc...) asparagine). Cys31 and Cys40 form a disulfide bridge. 5 residues coordinate 1D-myo-inositol hexakisphosphate: Tyr51, Arg81, His82, Arg85, and Thr88. 4 disulfide bridges follow: Cys71-Cys414, Cys215-Cys465, Cys264-Cys282, and Cys436-Cys444. The active-site Nucleophile is the His82. 2 N-linked (GlcNAc...) asparagine glycosylation sites follow: Asn105 and Asn120. Arg165 serves as a coordination point for 1D-myo-inositol hexakisphosphate. Residues Asn207 and Asn230 are each glycosylated (N-linked (GlcNAc...) asparagine). Lys301 is a binding site for 1D-myo-inositol hexakisphosphate. 2 N-linked (GlcNAc...) asparagine glycosylation sites follow: Asn339 and Asn352. Positions 361 and 362 each coordinate 1D-myo-inositol hexakisphosphate. A glycan (N-linked (GlcNAc...) asparagine) is linked at Asn376.

Belongs to the histidine acid phosphatase family. In terms of assembly, monomer.

Its subcellular location is the secreted. It carries out the reaction 1D-myo-inositol hexakisphosphate + H2O = 1D-myo-inositol 1,2,4,5,6-pentakisphosphate + phosphate. The enzyme catalyses 1D-myo-inositol 1,2,4,5,6-pentakisphosphate + H2O = 1D-myo-inositol 1,2,5,6-tetrakisphosphate + phosphate. The catalysed reaction is 1D-myo-inositol 1,2,5,6-tetrakisphosphate + H2O = 1D-myo-inositol 1,2,6-trisphosphate + phosphate. It catalyses the reaction 1D-myo-inositol 1,2,6-trisphosphate + H2O = 1D-myo-inositol 1,2-bisphosphate + phosphate. It carries out the reaction 1D-myo-inositol 1,2-bisphosphate + H2O = 1D-myo-inositol 2-phosphate + phosphate. Catalyzes the phosphate monoester hydrolysis of phytic acid (myo-inositol hexakisphosphate), which results in the stepwise formation of myo-inositol pentakis-, tetrakis-, tris-, bis-, and monophosphates, as well as the liberation of inorganic phosphate. Myo-inositol 2-monophosphate is the end product. Has a broad substrate specificity and is also able to dephosphorylate other classic acid phosphatase substrates such as p-nitrophenyl phosphate, phenyl phosphate, fructose 1,6-bisphosphate, glucose 6-phosphate, 3-phosphoglycerate, as well as ADP and ATP. The polypeptide is Phytase A (Aspergillus terreus).